We begin with the raw amino-acid sequence, 80 residues long: uncharacterized protein (80 aa).

Residues Met1–Ala23 form the signal peptide.

This is an uncharacterized protein from Bacillus subtilis (strain 168).